Here is a 275-residue protein sequence, read N- to C-terminus: Tryptase (275 aa).

The N-terminal stretch at 1-20 (MLNLLVLALPLLVSLVHTAP) is a signal peptide. Residues 21–30 (APGQALERAG) constitute a propeptide, activation peptide. The Peptidase S1 domain occupies 31-272 (IVGGKEAPGH…YLDWIHQCIP (242 aa)). A disulfide bond links Cys59 and Cys75. Catalysis depends on charge relay system residues His74 and Asp121. Asn132 carries N-linked (GlcNAc...) asparagine glycosylation. 3 cysteine pairs are disulfide-bonded: Cys155/Cys230, Cys188/Cys211, and Cys220/Cys248. Ser224 functions as the Charge relay system in the catalytic mechanism. Residue Asn233 is glycosylated (N-linked (GlcNAc...) asparagine).

This sequence belongs to the peptidase S1 family. Tryptase subfamily. In terms of assembly, homotetramer.

The protein localises to the secreted. The catalysed reaction is Preferential cleavage: Arg-|-Xaa, Lys-|-Xaa, but with more restricted specificity than trypsin.. Functionally, tryptase is the major neutral protease present in mast cells and is secreted upon the coupled activation-degranulation response of this cell type. The chain is Tryptase (MCT7) from Sus scrofa (Pig).